Consider the following 416-residue polypeptide: uncharacterized protein (416 aa).

Residues cysteine 63, cysteine 75, cysteine 78, and cysteine 152 each contribute to the [4Fe-4S] cluster site. Residues glutamine 253, phenylalanine 280, glutamate 300, and aspartate 348 each coordinate S-adenosyl-L-methionine. Cysteine 374 acts as the Nucleophile in catalysis.

It belongs to the class I-like SAM-binding methyltransferase superfamily. RNA M5U methyltransferase family.

This is an uncharacterized protein from Agrobacterium fabrum (strain C58 / ATCC 33970) (Agrobacterium tumefaciens (strain C58)).